The following is a 346-amino-acid chain: Flap endonuclease 1 (346 aa).

The interval 1–102 (MGVTELGKLI…AEIEERRKVK (102 aa)) is N-domain. 7 residues coordinate Mg(2+): Asp-31, Asp-84, Glu-156, Glu-158, Asp-177, Asp-179, and Asp-239. The I-domain stretch occupies residues 120 to 261 (DVAKYMKRAV…KALKLVWEFG (142 aa)).

It belongs to the XPG/RAD2 endonuclease family. FEN1 subfamily. In terms of assembly, interacts with PCNA. PCNA stimulates the nuclease activity without altering cleavage specificity. Mg(2+) is required as a cofactor.

Structure-specific nuclease with 5'-flap endonuclease and 5'-3' exonuclease activities involved in DNA replication and repair. During DNA replication, cleaves the 5'-overhanging flap structure that is generated by displacement synthesis when DNA polymerase encounters the 5'-end of a downstream Okazaki fragment. Binds the unpaired 3'-DNA end and kinks the DNA to facilitate 5' cleavage specificity. Cleaves one nucleotide into the double-stranded DNA from the junction in flap DNA, leaving a nick for ligation. Also involved in the base excision repair (BER) pathway. Acts as a genome stabilization factor that prevents flaps from equilibrating into structures that lead to duplications and deletions. Also possesses 5'-3' exonuclease activity on nicked or gapped double-stranded DNA. This chain is Flap endonuclease 1, found in Pyrobaculum islandicum (strain DSM 4184 / JCM 9189 / GEO3).